A 260-amino-acid polypeptide reads, in one-letter code: UPF0246 protein Bcen2424_2223 (260 aa).

It belongs to the UPF0246 family.

The sequence is that of UPF0246 protein Bcen2424_2223 from Burkholderia cenocepacia (strain HI2424).